The following is a 115-amino-acid chain: Somatostatin-1 (115 aa).

Positions 1–24 are cleaved as a signal peptide; sequence MQSCRVQCALTLLSLALAINSISA. A propeptide spanning residues 25-99 is cleaved from the precursor; the sequence is APTDPRLRQF…NSSPALAPRE (75 aa). The segment at 60-79 is disordered; it reads SQTDNEALESDDLPRGAEQD. Residues Cys104 and Cys115 are joined by a disulfide bond.

Belongs to the somatostatin family.

It localises to the secreted. Its function is as follows. Somatostatin inhibits the release of somatotropin. The polypeptide is Somatostatin-1 (sst1) (Pelophylax ridibundus (Marsh frog)).